Here is a 606-residue protein sequence, read N- to C-terminus: NADH-ubiquinone oxidoreductase chain 5 (606 aa).

Helical transmembrane passes span 1–21 (MNIF…PIIA), 38–58 (NIIS…IYSG), 87–107 (MIFV…SIWY), 114–134 (ITQF…LVTA), 140–160 (LFIG…WWYG), 171–191 (AILY…WFLS), 213–233 (LMGL…HPWL), 241–261 (TPVS…FLLI), 273–293 (AQTL…ICAL), 301–320 (IIAF…IGIN), 325–347 (AFLH…GSII), 366–386 (MPFT…MPFL), 409–429 (LLMT…MIFF), 457–477 (LLIG…PTTT), 488–508 (LMAL…SLAT), and 582–602 (GLIK…LLLL).

Belongs to the complex I subunit 5 family. As to quaternary structure, core subunit of respiratory chain NADH dehydrogenase (Complex I) which is composed of 45 different subunits.

The protein localises to the mitochondrion inner membrane. It carries out the reaction a ubiquinone + NADH + 5 H(+)(in) = a ubiquinol + NAD(+) + 4 H(+)(out). Core subunit of the mitochondrial membrane respiratory chain NADH dehydrogenase (Complex I) which catalyzes electron transfer from NADH through the respiratory chain, using ubiquinone as an electron acceptor. Essential for the catalytic activity and assembly of complex I. The polypeptide is NADH-ubiquinone oxidoreductase chain 5 (MT-ND5) (Rhinoceros unicornis (Greater Indian rhinoceros)).